Reading from the N-terminus, the 811-residue chain is Probable inorganic carbon transporter subunit DabA (811 aa).

4 residues coordinate Zn(2+): cysteine 336, aspartate 338, histidine 498, and cysteine 513.

Belongs to the inorganic carbon transporter (TC 9.A.2) DabA family. As to quaternary structure, forms a complex with DabB. It depends on Zn(2+) as a cofactor.

Its subcellular location is the cell inner membrane. In terms of biological role, part of an energy-coupled inorganic carbon pump. The sequence is that of Probable inorganic carbon transporter subunit DabA from Azorhizobium caulinodans (strain ATCC 43989 / DSM 5975 / JCM 20966 / LMG 6465 / NBRC 14845 / NCIMB 13405 / ORS 571).